The following is a 368-amino-acid chain: Interferon-stimulated 20 kDa exonuclease-like 2 (368 aa).

Disordered stretches follow at residues 33–107 and 127–187; these read FLEQ…APSK and PKTK…PTVP. Over residues 42–54 the composition is skewed to polar residues; the sequence is KKNQPPNKVSKLN. A compositionally biased stretch (basic and acidic residues) spans 77–96; it reads KKKEAAASKRDSERSKDKKA. Residues 131–145 show a composition bias toward basic residues; that stretch reads STQKKGSKKKSLKKK. Residues 194–368 form the Exonuclease domain; that stretch reads MVAIDCEMVG…QHLAQNPPEN (175 aa).

The protein localises to the nucleus. Its subcellular location is the nucleolus. 3'-&gt; 5'-exoribonuclease involved in ribosome biogenesis in the processing of the 12S pre-rRNA. Displays a strong specificity for a 3'-end containing a free hydroxyl group. The chain is Interferon-stimulated 20 kDa exonuclease-like 2 (Isg20l2) from Mus musculus (Mouse).